The primary structure comprises 520 residues: Putative transporter svop-1 (520 aa).

Residues 1 to 85 (MGDKAILTEV…LGFGRFQLKL (85 aa)) lie on the Cytoplasmic side of the membrane. The helical transmembrane segment at 86 to 106 (SILTGMAWMADAMEMMLLSLI) threads the bilayer. Topologically, residues 107 to 120 (SPALACEWGISSVQ) are extracellular. A helical transmembrane segment spans residues 121–141 (QALVTTCVFSGMMLSSTFWGK). Residues 142 to 157 (ICDRFGRRKGLTFSTL) are Cytoplasmic-facing. A helical membrane pass occupies residues 158-178 (VACIMGVISGMSPHFYVLLFF). Residue arginine 179 is a topological domain, extracellular. Residues 180 to 200 (GLTGFGIGGVPQSVTLYAEFL) form a helical membrane-spanning segment. At 201–208 (PTAQRAKC) the chain is on the cytoplasmic side. The chain crosses the membrane as a helical span at residues 209 to 229 (VVLIESFWAIGAVFEALLAYF). At 230 to 237 (VMESFGWR) the chain is on the extracellular side. A helical transmembrane segment spans residues 238–258 (ALMFLSSLPLGIFAVASFWLP). The Cytoplasmic portion of the chain corresponds to 259 to 319 (ESARFDMASG…LLSPDLRKTT (61 aa)). The chain crosses the membrane as a helical span at residues 320 to 340 (ILLWCIWAITAFSYYGMVLFT). Over 341–372 (TVLFQSHDECHGGLFSNGTQMEVCQPLTRSDY) the chain is Extracellular. A helical membrane pass occupies residues 373 to 393 (FDLLSTTLAEFPGLIITVLII). Residues 394-410 (EWFGRKKTMALEYAVFA) are Cytoplasmic-facing. The helical transmembrane segment at 411-431 (IFTFLLYFCLDRFTVTVLIFV) threads the bilayer. The Extracellular segment spans residues 432-434 (ARA). A helical membrane pass occupies residues 435-455 (FISGAFQCAYVYTPEVYPTTL). Residues 456-461 (RAVGLG) are Cytoplasmic-facing. A helical transmembrane segment spans residues 462–487 (TCSAMARIGAIVTPFIAQVASEKSLS). The Extracellular portion of the chain corresponds to 488–489 (LP). The helical transmembrane segment at 490–509 (IGIYGTAAILGLIASLSLPI) threads the bilayer. The Cytoplasmic portion of the chain corresponds to 510–520 (ETKGRQMMDSH).

The protein belongs to the major facilitator superfamily.

The protein resides in the membrane. This Caenorhabditis elegans protein is Putative transporter svop-1.